The primary structure comprises 205 residues: Protein TGAM_1450 (205 aa).

In terms of domain architecture, AMMECR1 spans 7-201; that stretch reads EWGEFLVRLA…EEYPRGPVRR (195 aa).

The chain is Protein TGAM_1450 from Thermococcus gammatolerans (strain DSM 15229 / JCM 11827 / EJ3).